Here is a 548-residue protein sequence, read N- to C-terminus: Sesquiterpene synthase 12 (548 aa).

Mg(2+) is bound by residues D299, D303, D444, and E452. Residues 299–303 carry the DDXXD motif motif; sequence DDTFD.

The protein belongs to the terpene synthase family. Tpsa subfamily. Mg(2+) serves as cofactor. The cofactor is Mn(2+). Mostly expressed in leaves, to a lower extent in stems, trichomes, flowers and roots and, at low levels, in fruits.

The catalysed reaction is (2E,6E)-farnesyl diphosphate = alpha-humulene + diphosphate. It catalyses the reaction (2E,6E)-farnesyl diphosphate = (-)-(E)-beta-caryophyllene + diphosphate. The enzyme catalyses (2Z,6Z)-farnesyl diphosphate = beta-bisabolene + diphosphate. It carries out the reaction (2E)-geranyl diphosphate = terpinolene + diphosphate. The catalysed reaction is (2E)-geranyl diphosphate = limonene + diphosphate. It catalyses the reaction (2E)-geranyl diphosphate = beta-myrcene + diphosphate. The enzyme catalyses (2E)-geranyl diphosphate = (E)-beta-ocimene + diphosphate. It carries out the reaction (2Z,6Z)-farnesyl diphosphate = gamma-curcumene + diphosphate. The catalysed reaction is (2Z,6Z)-farnesyl diphosphate = (Z)-gamma-bisabolene + diphosphate. It participates in secondary metabolite biosynthesis; terpenoid biosynthesis. Sesquiterpene synthase involved in the biosynthesis of volatile compounds. Mediates the conversion of (2E,6E)-farnesyl diphosphate (FPP) into (1E,4E,8E)-alpha-humulene and (-)-(E)-beta-caryophyllene, and of (2Z,6Z)-farnesyl diphosphate ((ZZ)-FPP) into beta-bisabolene, gamma-curcumene and (Z)-gamma-bisabolene. Can act with a low efficiency as a monoterpene synthase with geranyl diphosphate (GPP) as substrate, thus producing beta-myrcene, (E)-beta-ocimene, limonene and terpinolene. The polypeptide is Sesquiterpene synthase 12 (Solanum lycopersicum (Tomato)).